A 203-amino-acid polypeptide reads, in one-letter code: Urease accessory protein UreG (203 aa).

11–18 (GPVGSGKT) contributes to the GTP binding site.

Belongs to the SIMIBI class G3E GTPase family. UreG subfamily. As to quaternary structure, homodimer. UreD, UreF and UreG form a complex that acts as a GTP-hydrolysis-dependent molecular chaperone, activating the urease apoprotein by helping to assemble the nickel containing metallocenter of UreC. The UreE protein probably delivers the nickel.

It localises to the cytoplasm. Its function is as follows. Facilitates the functional incorporation of the urease nickel metallocenter. This process requires GTP hydrolysis, probably effectuated by UreG. This Prochlorococcus marinus (strain MIT 9301) protein is Urease accessory protein UreG.